We begin with the raw amino-acid sequence, 232 residues long: tRNA (guanine-N(7)-)-methyltransferase (232 aa).

S-adenosyl-L-methionine-binding residues include E63, E88, D115, and D137. D137 is an active-site residue. Substrate is bound by residues K141, D173, and 211–214; that span reads TRYE.

Belongs to the class I-like SAM-binding methyltransferase superfamily. TrmB family.

The catalysed reaction is guanosine(46) in tRNA + S-adenosyl-L-methionine = N(7)-methylguanosine(46) in tRNA + S-adenosyl-L-homocysteine. It participates in tRNA modification; N(7)-methylguanine-tRNA biosynthesis. Catalyzes the formation of N(7)-methylguanine at position 46 (m7G46) in tRNA. This Chelativorans sp. (strain BNC1) protein is tRNA (guanine-N(7)-)-methyltransferase.